Consider the following 76-residue polypeptide: Kappa-actitoxin-Avd4m (76 aa).

The N-terminal stretch at 1-19 (MNKALFLCLVVLCAAVVFA) is a signal peptide. Positions 20-31 (AEDLQKAKHAPF) are excised as a propeptide. 3 disulfide bridges follow: Cys37–Cys72, Cys39–Cys65, and Cys55–Cys73.

The protein belongs to the sea anemone type 3 (BDS) potassium channel toxin family. In terms of tissue distribution, weakly expressed in the ectodermal tissue from the distal and proximal tentacles, body wall, and oral disk.

The protein resides in the secreted. The protein localises to the nematocyst. In terms of biological role, blocks Kv3 voltage-gated potassium channels. Reduces blood pressure. The chain is Kappa-actitoxin-Avd4m from Anemonia viridis (Snakelocks anemone).